Reading from the N-terminus, the 395-residue chain is Ribosomal RNA small subunit methyltransferase H (395 aa).

Residues 101-103, Asp-120, Tyr-147, Asp-171, and Gln-178 contribute to the S-adenosyl-L-methionine site; that span reads GGH.

The protein belongs to the methyltransferase superfamily. RsmH family.

It localises to the cytoplasm. It catalyses the reaction cytidine(1402) in 16S rRNA + S-adenosyl-L-methionine = N(4)-methylcytidine(1402) in 16S rRNA + S-adenosyl-L-homocysteine + H(+). Functionally, specifically methylates the N4 position of cytidine in position 1402 (C1402) of 16S rRNA. The sequence is that of Ribosomal RNA small subunit methyltransferase H from Mycobacterium ulcerans (strain Agy99).